Here is an 883-residue protein sequence, read N- to C-terminus: Envelope glycoprotein B (883 aa).

The first 31 residues, 1–31, serve as a signal peptide directing secretion; sequence MQSYIAVNIDMASLKMLICVCVAILIPSTLS. Residues 32-750 are Virion surface-facing; the sequence is QDSHGIAGII…SGIASFLSNP (719 aa). Intrachain disulfides connect C77–C535, C94–C491, C167–C229, C321–C369, and C558–C608. Residues N102 and N121 are each glycosylated (N-linked (GlcNAc...) asparagine; by host). The interval 134-140 is involved in fusion and/or binding to host membrane; that stretch reads TWALFSR. An N-linked (GlcNAc...) asparagine; by host glycan is attached at N211. The tract at residues 216-223 is involved in fusion and/or binding to host membrane; that stretch reads HQTLGYRT. 2 N-linked (GlcNAc...) asparagine; by host glycosylation sites follow: N262 and N360. Residues 428 to 457 form a disordered region; sequence QNHLPRGRERRQAAGRRTASLQSGPQGDRI. 3 N-linked (GlcNAc...) asparagine; by host glycosylation sites follow: N579, N635, and N649. Hydrophobic membrane proximal region regions lie at residues 694-748 and 724-744; these read IDTV…SFLS and ALGTVVMTAAAAVISTVSGIA. Residues 751-771 traverse the membrane as a helical segment; that stretch reads FAALGIGIAVVVSIILGLLAF. Topologically, residues 772–883 are intravirion; sequence KYVMNLKSNP…PSWAEESEDE (112 aa). The segment at 791 to 817 is disordered; sequence PPAGTPPRPSRRYYKDEEEVEEDSDED. Acidic residues predominate over residues 806–817; that stretch reads DEEEVEEDSDED. The Internalization motif motif lies at 868-871; it reads YPLL.

This sequence belongs to the herpesviridae glycoprotein B family. As to quaternary structure, homotrimer; disulfide-linked. Binds to heparan sulfate proteoglycans. Interacts with gH/gL heterodimer. Post-translationally, a proteolytic cleavage by host furin generates two subunits that remain linked by disulfide bonds.

The protein resides in the virion membrane. Its subcellular location is the host cell membrane. The protein localises to the host endosome membrane. It localises to the host Golgi apparatus membrane. Envelope glycoprotein that forms spikes at the surface of virion envelope. Essential for the initial attachment to heparan sulfate moieties of the host cell surface proteoglycans. Involved in fusion of viral and cellular membranes leading to virus entry into the host cell. Following initial binding to its host receptors, membrane fusion is mediated by the fusion machinery composed at least of gB and the heterodimer gH/gL. May be involved in the fusion between the virion envelope and the outer nuclear membrane during virion egress. The protein is Envelope glycoprotein B of Gallus gallus (Chicken).